The chain runs to 440 residues: Chromosome partition protein MukF (440 aa).

Residues 208–236 (LSETSGTLRELQDTLEAAGDKLQANLLQI) are leucine-zipper.

Belongs to the MukF family. Interacts, and probably forms a ternary complex, with MukE and MukB via its C-terminal region. The complex formation is stimulated by calcium or magnesium. It is required for an interaction between MukE and MukB.

The protein resides in the cytoplasm. Its subcellular location is the nucleoid. Functionally, involved in chromosome condensation, segregation and cell cycle progression. May participate in facilitating chromosome segregation by condensation DNA from both sides of a centrally located replisome during cell division. Not required for mini-F plasmid partitioning. Probably acts via its interaction with MukB and MukE. Overexpression results in anucleate cells. It has a calcium binding activity. The chain is Chromosome partition protein MukF from Cronobacter sakazakii (strain ATCC BAA-894) (Enterobacter sakazakii).